Consider the following 440-residue polypeptide: Protein disulfide-isomerase A6 homolog (440 aa).

Positions 1–18 (MALIKLLLASLAITSVCG) are cleaved as a signal peptide. 2 consecutive Thioredoxin domains span residues 19-131 (MYSK…AEAK) and 127-273 (LAEA…ARAQ). Residues Cys54 and Cys57 each act as nucleophile in the active site. A disulfide bridge connects residues Cys54 and Cys57. Positions 138-164 (LGGKSSGSSSSGSGSGSGKRGGGGSGN) are disordered. Residues 139–149 (GGKSSGSSSSG) are compositionally biased toward low complexity. Positions 150-163 (SGSGSGKRGGGGSG) are enriched in gly residues. Residues Cys194 and Cys197 each act as nucleophile in the active site. Cys194 and Cys197 are disulfide-bonded. A disordered region spans residues 404–426 (DGFPKIQKTEKWDGKDGALPAED). Residues 410–419 (QKTEKWDGKD) show a composition bias toward basic and acidic residues. The short motif at 437–440 (KTEL) is the Prevents secretion from ER element.

Belongs to the protein disulfide isomerase family.

It localises to the endoplasmic reticulum lumen. The catalysed reaction is Catalyzes the rearrangement of -S-S- bonds in proteins.. May function as a chaperone that inhibits aggregation of misfolded proteins. May negatively regulate the unfolded protein response (UPR) through binding to UPR sensors. The sequence is that of Protein disulfide-isomerase A6 homolog from Caenorhabditis elegans.